Here is a 152-residue protein sequence, read N- to C-terminus: Nucleoside diphosphate kinase B (152 aa).

Residues 1-66 (MANLERTFIA…DRPFFPGLVK (66 aa)) are interaction with AKAP13. ATP is bound by residues Lys12, Phe60, Arg88, Thr94, Arg105, and Asn115. Residue His118 is the Pros-phosphohistidine intermediate of the active site.

This sequence belongs to the NDK family. Hexamer of two different chains: An and B (A6, A5B, A4B2, A3B3, A2B4, AB5, B6). Interacts with CAPN8. Interacts with AKAP13. Interacts with ITGB1BP1 (via C-terminal domain region). Interacts with BCL2L10. It depends on Mg(2+) as a cofactor. In terms of tissue distribution, ubiquitously expressed.

Its subcellular location is the cytoplasm. The protein localises to the cell projection. The protein resides in the lamellipodium. It is found in the ruffle. It localises to the perinuclear region. Its subcellular location is the nucleus. The enzyme catalyses a 2'-deoxyribonucleoside 5'-diphosphate + ATP = a 2'-deoxyribonucleoside 5'-triphosphate + ADP. It carries out the reaction a ribonucleoside 5'-diphosphate + ATP = a ribonucleoside 5'-triphosphate + ADP. The catalysed reaction is ATP + protein L-histidine = ADP + protein N-phospho-L-histidine.. Its function is as follows. Major role in the synthesis of nucleoside triphosphates other than ATP. The ATP gamma phosphate is transferred to the NDP beta phosphate via a ping-pong mechanism, using a phosphorylated active-site intermediate. Negatively regulates Rho activity by interacting with AKAP13/LBC. Acts as a transcriptional activator of the MYC gene; binds DNA non-specifically. Binds to both single-stranded guanine- and cytosine-rich strands within the nuclease hypersensitive element (NHE) III(1) region of the MYC gene promoter. Does not bind to duplex NHE III(1). Has G-quadruplex (G4) DNA-binding activity, which is independent of its nucleotide-binding and kinase activity. Binds both folded and unfolded G4 with similar low nanomolar affinities. Stabilizes folded G4s regardless of whether they are prefolded or not. Exhibits histidine protein kinase activity. In Homo sapiens (Human), this protein is Nucleoside diphosphate kinase B (NME2).